A 120-amino-acid polypeptide reads, in one-letter code: UPF0145 protein UNCMA_30400 (120 aa).

Belongs to the UPF0145 family.

The chain is UPF0145 protein UNCMA_30400 from Methanocella arvoryzae (strain DSM 22066 / NBRC 105507 / MRE50).